The sequence spans 379 residues: GDSL esterase/lipase At3g05180 (379 aa).

The N-terminal stretch at 1–27 (METLFHTLLRLLLFVAISHTLSPLAGS) is a signal peptide. The active-site Nucleophile is Ser-43. 2 N-linked (GlcNAc...) asparagine glycosylation sites follow: Asn-294 and Asn-330. Catalysis depends on residues Asp-349 and His-352.

Belongs to the 'GDSL' lipolytic enzyme family.

It is found in the secreted. The polypeptide is GDSL esterase/lipase At3g05180 (Arabidopsis thaliana (Mouse-ear cress)).